Consider the following 113-residue polypeptide: Protein C21/B27 (113 aa).

This chain is Protein C21/B27, found in Homo sapiens (Human).